Consider the following 203-residue polypeptide: Urease accessory protein UreG (203 aa).

13 to 20 (GPVGSGKT) serves as a coordination point for GTP.

Belongs to the SIMIBI class G3E GTPase family. UreG subfamily. In terms of assembly, homodimer. UreD, UreF and UreG form a complex that acts as a GTP-hydrolysis-dependent molecular chaperone, activating the urease apoprotein by helping to assemble the nickel containing metallocenter of UreC. The UreE protein probably delivers the nickel.

The protein localises to the cytoplasm. In terms of biological role, facilitates the functional incorporation of the urease nickel metallocenter. This process requires GTP hydrolysis, probably effectuated by UreG. The protein is Urease accessory protein UreG of Methylobacillus flagellatus (strain ATCC 51484 / DSM 6875 / VKM B-1610 / KT).